We begin with the raw amino-acid sequence, 396 residues long: Aldo-keto reductase ausK (396 aa).

Residue Asp76 participates in NADP(+) binding. The Proton donor role is filled by Tyr81. A substrate-binding site is contributed by His156. Residues 186–187, Gln212, 241–251, and 317–325 contribute to the NADP(+) site; these read CN, DALGSGKFQSR, and RKIQHLHDN.

The protein belongs to the aldo/keto reductase family. Aldo/keto reductase 2 subfamily. As to quaternary structure, homodimer.

Its pathway is secondary metabolite biosynthesis; terpenoid biosynthesis. Its function is as follows. Aldo-keto reductase; part of the gene cluster that mediates the biosynthesis of calidodehydroaustin, a fungal meroterpenoid. The first step of the pathway is the synthesis of 3,5-dimethylorsellinic acid by the polyketide synthase ausA. 3,5-dimethylorsellinic acid is then prenylated by the polyprenyl transferase ausN. Further epoxidation by the FAD-dependent monooxygenase ausM and cyclization by the probable terpene cyclase ausL lead to the formation of protoaustinoid A. Protoaustinoid A is then oxidized to spiro-lactone preaustinoid A3 by the combined action of the FAD-binding monooxygenases ausB and ausC, and the dioxygenase ausE. Acid-catalyzed keto-rearrangement and ring contraction of the tetraketide portion of preaustinoid A3 by ausJ lead to the formation of preaustinoid A4. The aldo-keto reductase ausK, with the help of ausH, is involved in the next step by transforming preaustinoid A4 into isoaustinone which is in turn hydroxylated by the P450 monooxygenase ausI to form austinolide. The cytochrome P450 monooxygenase ausG modifies austinolide to austinol. Austinol is further acetylated to austin by the O-acetyltransferase ausP, which spontaneously changes to dehydroaustin. The cytochrome P450 monooxygenase ausR then converts dehydroaustin is into 7-dehydrodehydroaustin. The hydroxylation catalyzed by ausR permits the O-acetyltransferase ausQ to add an additional acetyl group to the molecule, leading to the formation of acetoxydehydroaustin. The short chain dehydrogenase ausT catalyzes the reduction of the double bond present between carbon atoms 1 and 2 to convert 7-dehydrodehydroaustin into 1,2-dihydro-7-hydroxydehydroaustin. AusQ catalyzes not only an acetylation reaction but also the addition of the PKS ausV diketide product to 1,2-dihydro-7-hydroxydehydroaustin, forming precalidodehydroaustin. Finally, the iron/alpha-ketoglutarate-dependent dioxygenase converts precalidodehydroaustin into calidodehydroaustin. This is Aldo-keto reductase ausK from Aspergillus calidoustus.